The following is a 297-amino-acid chain: Heterogeneous nuclear ribonucleoprotein D-like (297 aa).

A disordered region spans residues 1–21 (MTGFGATPDFNEGSKINASKN). RRM domains lie at 26-108 (GKMF…KGKE) and 111-190 (KKVF…QPKE). Positions 192-224 (YRQQQQKQQKGGRGAATGRGGARGRGRGQGWNQ) are disordered. Positions 202 to 222 (GGRGAATGRGGARGRGRGQGW) are enriched in gly residues.

The protein resides in the nucleus. Its subcellular location is the cytoplasm. Its function is as follows. Acts as a transcriptional regulator. Binds DNA and RNA. The polypeptide is Heterogeneous nuclear ribonucleoprotein D-like (hnrnpdl) (Xenopus tropicalis (Western clawed frog)).